Consider the following 301-residue polypeptide: Lysozyme-like protein 3 (301 aa).

Positions 1 to 15 (MKLFALLVSITLCYS) are cleaved as a signal peptide. One can recognise a Ch-type lysozyme domain in the interval 64–282 (HAYSVDISFH…HLSQIVHFST (219 aa)).

It belongs to the glycosyl hydrolase 25 family.

In terms of biological role, plays a role in the stress response to heavy metals such as copper, probably in a kgb-1-dependent manner. The protein is Lysozyme-like protein 3 of Caenorhabditis elegans.